A 464-amino-acid polypeptide reads, in one-letter code: Protein btn-1 (464 aa).

Residues 1–22 (MNRSPSSSGLLPLPGAPSSSWA) form the signal peptide. The next 10 membrane-spanning stretches (helical) occupy residues 38 to 58 (AVFI…VIIL), 73 to 93 (VVLL…PYFI), 102 to 122 (IFIF…TPPS), 129 to 149 (LIGV…FLGL), 167 to 187 (GAGL…GLSV), 190 to 210 (SLLA…LILP), 288 to 308 (SLFF…YTIN), 332 to 352 (PFYG…IAFI), 354 to 374 (IHHL…LTLH), and 376 to 396 (LLNF…EGLL).

It belongs to the battenin family.

It localises to the vacuole membrane. In terms of biological role, involved in vacuolar transport and vacuole pH homeostasis. Also required for cytokinesis. This chain is Protein btn-1 (cln3), found in Neurospora crassa (strain ATCC 24698 / 74-OR23-1A / CBS 708.71 / DSM 1257 / FGSC 987).